Here is a 350-residue protein sequence, read N- to C-terminus: Integrin beta-1-binding protein 2 (350 aa).

Zn(2+) contacts are provided by Cys-5, Cys-10, Cys-24, and His-27. Residues Cys-5–His-64 enclose the CHORD 1 domain. Positions Pro-28 to Pro-31 match the SH3-binding motif. Residues Cys-42, Cys-43, Cys-59, and His-64 each coordinate Zn(2+). The short motif at Pro-70–Pro-79 is the SH3-binding element. Positions Val-72–Thr-92 are disordered. Residues Ala-80–Thr-92 are compositionally biased toward polar residues. The Zn(2+) site is built by Cys-150 and Cys-155. Residues Cys-150–His-209 enclose the CHORD 2 domain. Positions Tyr-159–Pro-162 match the SH2-binding motif. Zn(2+)-binding residues include Cys-169 and His-172. An SH3-binding motif is present at residues Pro-173 to Pro-176. Zn(2+) is bound by residues Cys-187, Cys-188, Cys-204, and His-209. A CS domain is found at Pro-216–Glu-305. The SH2-binding motif lies at Tyr-235–Ile-238. The segment at Gly-317–Glu-350 is disordered. Positions Glu-321–Glu-350 are enriched in acidic residues.

Interacts with beta-1 integrin subunit. This interaction is regulated by divalent cations, and it occurs only in absence of calcium. In terms of tissue distribution, expressed in skeletal and cardiac muscles but not in other tissues. Is localized in rows flanking the Z line containing alpha-actinin.

Its function is as follows. May play a role during maturation and/or organization of muscles cells. This is Integrin beta-1-binding protein 2 (Itgb1bp2) from Mus musculus (Mouse).